A 539-amino-acid chain; its full sequence is uncharacterized protein (539 aa).

2 consecutive ABC transporter domains span residues L9 to K276 and I288 to F536. ATP-binding positions include G41–S48 and G325–T332.

It belongs to the ABC transporter superfamily.

This is an uncharacterized protein from Methanocaldococcus jannaschii (strain ATCC 43067 / DSM 2661 / JAL-1 / JCM 10045 / NBRC 100440) (Methanococcus jannaschii).